The sequence spans 227 residues: MIKAVLIDIEGTVSPISFVKEVLFPYSKERIEEFIKKNLDNPDIKRIIQDIKNIEGRDLTLEEVVNTLIRWIDQDKKITPLKEIQGYIWEEGFRSGRLKAPVYEDAYRKLKEWKEKNIPMYIYSSGSVKAQKLFFSHTEYGDLTGFFSGFFDTKTGNKKDPQSYLKIAEAVGLKPENILFLSDNPDEIRAAAEAGMKVIKISRPEDSPYIDNFPYRQVDSFDQITDL.

It belongs to the HAD-like hydrolase superfamily. MasA/MtnC family. As to quaternary structure, monomer. The cofactor is Mg(2+).

The enzyme catalyses 5-methylsulfanyl-2,3-dioxopentyl phosphate + H2O = 1,2-dihydroxy-5-(methylsulfanyl)pent-1-en-3-one + phosphate. Its pathway is amino-acid biosynthesis; L-methionine biosynthesis via salvage pathway; L-methionine from S-methyl-5-thio-alpha-D-ribose 1-phosphate: step 3/6. It functions in the pathway amino-acid biosynthesis; L-methionine biosynthesis via salvage pathway; L-methionine from S-methyl-5-thio-alpha-D-ribose 1-phosphate: step 4/6. Bifunctional enzyme that catalyzes the enolization of 2,3-diketo-5-methylthiopentyl-1-phosphate (DK-MTP-1-P) into the intermediate 2-hydroxy-3-keto-5-methylthiopentenyl-1-phosphate (HK-MTPenyl-1-P), which is then dephosphorylated to form the acireductone 1,2-dihydroxy-3-keto-5-methylthiopentene (DHK-MTPene). The sequence is that of Enolase-phosphatase E1 from Persephonella marina (strain DSM 14350 / EX-H1).